A 362-amino-acid polypeptide reads, in one-letter code: Protein ABHD12B (362 aa).

It belongs to the serine esterase family.

In Homo sapiens (Human), this protein is Protein ABHD12B.